An 833-amino-acid chain; its full sequence is Phosphatidylinositol-3-phosphatase myotubularin-2 (833 aa).

The GRAM domain occupies 42-109; the sequence is GSYSNLDCLL…VAIEKFNKLA (68 aa). The Myotubularin phosphatase domain occupies 181 to 647; that stretch reads TNPKERLLNE…LAPTLWPQFH (467 aa). Residues 329–332, 354–355, 440–446, and Arg-486 contribute to the substrate site; these read NGAK, NI, and CSDGWDR. Cys-440 functions as the Phosphocysteine intermediate in the catalytic mechanism. The disordered stretch occupies residues 503–530; that stretch reads QSSSARSFPSSPVRQSPGSAAAQSSSSS. Over residues 504–530 the composition is skewed to low complexity; that stretch reads SSSARSFPSSPVRQSPGSAAAQSSSSS. Positions 660-717 form a coiled coil; the sequence is ETEDQCRAMTVKYSEMKKEKEEAERKVDELSSAMESLNEELLNERDISRAARESAKRA. The disordered stretch occupies residues 753–772; the sequence is KCSHSIPQKQSEDNTTDVSE.

This sequence belongs to the protein-tyrosine phosphatase family. Non-receptor class myotubularin subfamily. In terms of tissue distribution, mostly expressed in flowers and roots, and, to a lower extent, in siliques and leaves.

It localises to the cytoplasm. It carries out the reaction a 1,2-diacyl-sn-glycero-3-phospho-(1D-myo-inositol-3-phosphate) + H2O = a 1,2-diacyl-sn-glycero-3-phospho-(1D-myo-inositol) + phosphate. It catalyses the reaction a 1,2-diacyl-sn-glycero-3-phospho-(1D-myo-inositol-3,5-bisphosphate) + H2O = a 1,2-diacyl-sn-glycero-3-phospho-(1D-myo-inositol-5-phosphate) + phosphate. In terms of biological role, phosphatase with phosphoinositide 3'-phosphatase activity that can use phosphatidylinositol-3-phosphate (PtdIns3P) and phosphatidylinositol-3,5-diphosphate (PtdIns3,5P(2)) as substrates and produces phosphatidylinositol-5-phosphate (PtdIns5P); participates in pathway(s) that transfer gene regulatory signals to the nucleus. In Arabidopsis thaliana (Mouse-ear cress), this protein is Phosphatidylinositol-3-phosphatase myotubularin-2 (MTM2).